We begin with the raw amino-acid sequence, 105 residues long: Late embryogenesis abundant protein Lea5-A (105 aa).

This sequence belongs to the LEA type 3 family.

This chain is Late embryogenesis abundant protein Lea5-A (LEA5-A), found in Gossypium hirsutum (Upland cotton).